We begin with the raw amino-acid sequence, 264 residues long: Indole-3-glycerol phosphate synthase (264 aa).

The protein belongs to the TrpC family.

It carries out the reaction 1-(2-carboxyphenylamino)-1-deoxy-D-ribulose 5-phosphate + H(+) = (1S,2R)-1-C-(indol-3-yl)glycerol 3-phosphate + CO2 + H2O. The protein operates within amino-acid biosynthesis; L-tryptophan biosynthesis; L-tryptophan from chorismate: step 4/5. The protein is Indole-3-glycerol phosphate synthase of Rhizorhabdus wittichii (strain DSM 6014 / CCUG 31198 / JCM 15750 / NBRC 105917 / EY 4224 / RW1) (Sphingomonas wittichii).